We begin with the raw amino-acid sequence, 96 residues long: Protein FPV129 (96 aa).

2 helical membrane-spanning segments follow: residues 36–56 and 71–91; these read IILD…FVII and LFLL…LYIV.

Belongs to the chordopoxvirinae L2 family.

The protein localises to the virion membrane. The protein resides in the host cytoplasm. Its function is as follows. Early protein involved in early virion morphogenesis. Participates in the formation and elongation of crescent-shaped membrane precursors of immature virions in cytoplasmic factories. The polypeptide is Protein FPV129 (Vertebrata (FPV)).